Consider the following 42-residue polypeptide: Omega-theraphotoxin-Asp3a (42 aa).

Cystine bridges form between Cys-1/Cys-16, Cys-8/Cys-21, and Cys-15/Cys-30.

The protein belongs to the neurotoxin 14 (magi-1) family. 08 (Ltx-4) subfamily. Expressed by the venom gland.

It is found in the secreted. In terms of biological role, inhibits voltage-gated calcium channels (Cav) in rat cerebellar granule cells. The sequence is that of Omega-theraphotoxin-Asp3a from Aphonopelma sp. (American tarantula).